A 303-amino-acid polypeptide reads, in one-letter code: Digeranylgeranylglyceryl phosphate synthase (303 aa).

Transmembrane regions (helical) follow at residues 23-43 (VLGVIAGAALLGEVNVAAAIA), 88-108 (LALALLALGPLLGLAVGPLTG), 130-150 (LPGNLAVSFSTASTLLYGSLA), 164-184 (TIPIILMVFLMTLAREVVKGV), 206-228 (FALRAALALACASLALAYLAAPL), 232-254 (GYAFLAFVTLGGLLSLASVAACL), and 272-292 (VAMFLGLIGILVDRLVQPVFY).

The protein belongs to the UbiA prenyltransferase family. DGGGP synthase subfamily. The cofactor is Mg(2+).

The protein localises to the cell membrane. The catalysed reaction is sn-3-O-(geranylgeranyl)glycerol 1-phosphate + (2E,6E,10E)-geranylgeranyl diphosphate = 2,3-bis-O-(geranylgeranyl)-sn-glycerol 1-phosphate + diphosphate. It functions in the pathway membrane lipid metabolism; glycerophospholipid metabolism. Functionally, prenyltransferase that catalyzes the transfer of the geranylgeranyl moiety of geranylgeranyl diphosphate (GGPP) to the C2 hydroxyl of (S)-3-O-geranylgeranylglyceryl phosphate (GGGP). This reaction is the second ether-bond-formation step in the biosynthesis of archaeal membrane lipids. The chain is Digeranylgeranylglyceryl phosphate synthase from Ignicoccus hospitalis (strain KIN4/I / DSM 18386 / JCM 14125).